Consider the following 188-residue polypeptide: Elongation factor P (188 aa).

The protein belongs to the elongation factor P family.

It is found in the cytoplasm. It participates in protein biosynthesis; polypeptide chain elongation. Its function is as follows. Involved in peptide bond synthesis. Stimulates efficient translation and peptide-bond synthesis on native or reconstituted 70S ribosomes in vitro. Probably functions indirectly by altering the affinity of the ribosome for aminoacyl-tRNA, thus increasing their reactivity as acceptors for peptidyl transferase. The sequence is that of Elongation factor P from Wolbachia sp. subsp. Drosophila simulans (strain wRi).